Reading from the N-terminus, the 155-residue chain is DNA gyrase inhibitor (155 aa).

The protein belongs to the DNA gyrase inhibitor family. As to quaternary structure, interacts with DNA gyrase.

It is found in the cytoplasm. Functionally, inhibits the supercoiling activity of DNA gyrase. Acts by inhibiting DNA gyrase at an early step, prior to (or at the step of) binding of DNA by the gyrase. It protects cells against toxins that target DNA gyrase, by inhibiting activity of these toxins and reducing the formation of lethal double-strand breaks in the cell. This is DNA gyrase inhibitor from Salmonella typhi.